The following is a 173-amino-acid chain: Photosystem I assembly protein Ycf3 (173 aa).

3 TPR repeats span residues 35 to 68, 72 to 105, and 120 to 153; these read AYIY…EENP, GETL…NPKQ, and GRSA…YPGG.

This sequence belongs to the Ycf3 family.

The protein resides in the cellular thylakoid membrane. Essential for the assembly of the photosystem I (PSI) complex. May act as a chaperone-like factor to guide the assembly of the PSI subunits. In Prochlorococcus marinus (strain MIT 9211), this protein is Photosystem I assembly protein Ycf3.